We begin with the raw amino-acid sequence, 314 residues long: Methionyl-tRNA formyltransferase (314 aa).

(6S)-5,6,7,8-tetrahydrofolate is bound at residue 110 to 113 (SLLP).

It belongs to the Fmt family.

The enzyme catalyses L-methionyl-tRNA(fMet) + (6R)-10-formyltetrahydrofolate = N-formyl-L-methionyl-tRNA(fMet) + (6S)-5,6,7,8-tetrahydrofolate + H(+). Attaches a formyl group to the free amino group of methionyl-tRNA(fMet). The formyl group appears to play a dual role in the initiator identity of N-formylmethionyl-tRNA by promoting its recognition by IF2 and preventing the misappropriation of this tRNA by the elongation apparatus. In Bacillus mycoides (strain KBAB4) (Bacillus weihenstephanensis), this protein is Methionyl-tRNA formyltransferase.